Here is a 620-residue protein sequence, read N- to C-terminus: Glutathione-regulated potassium-efflux system protein KefC (620 aa).

12 helical membrane passes run 4-24, 26-46, 54-74, 90-110, 114-134, 149-169, 178-198, 218-238, 270-290, 294-314, 327-347, and 359-379; these read HTLIQALIYLGSAALIVPIAV, LGLGSVLGYLIAGCIIGPWGL, SILHFAEIGVVLMLFIIGLEL, GALQMVICGGLLGLFCMLLGL, VAELIGMTLALSSTAIAMQAM, FAVLLFQDIAAIPLVAMIPLL, MGAFVLSALKVAGALVLVVLL, VFSAVALFLVFGFGLLLEEVG, GLLLGLFFIGVGMSIDFGTLL, LRIVILLLGFLIIKIAMLWLI, WFAVLLGQGSEFAFVVFGAAQ, and SLTLAVALSMAATPILLVILN. One can recognise an RCK N-terminal domain in the interval 399-518; it reads QPRVIIAGFG…AGVEKPERET (120 aa). Residues 597–620 form a disordered region; sequence GWQGTEEGKHTGNMADEPETKPSS.

The protein belongs to the monovalent cation:proton antiporter 2 (CPA2) transporter (TC 2.A.37) family. KefC subfamily. Homodimer. Interacts with the regulatory subunit KefF.

It localises to the cell inner membrane. Its function is as follows. Pore-forming subunit of a potassium efflux system that confers protection against electrophiles. Catalyzes K(+)/H(+) antiport. The protein is Glutathione-regulated potassium-efflux system protein KefC of Escherichia coli O127:H6 (strain E2348/69 / EPEC).